The chain runs to 981 residues: Amidohydrolase tasK (981 aa).

The interval 1–36 is disordered; that stretch reads MDDQKGPLPPYTPTATAPPPASMRQRRPPGRRRALR. Residues 7-21 are compositionally biased toward pro residues; that stretch reads PLPPYTPTATAPPPA. A compositionally biased stretch (basic residues) spans 24–36; the sequence is RQRRPPGRRRALR. Residues 40-57 traverse the membrane as a helical segment; the sequence is TVRVLALACLAFVVLAQW. Residues 86-107 form a disordered region; sequence LRVRPQDPAGPGRSKNDRYLDG. 2 residues coordinate Fe(2+): His187 and His189. Zn(2+) is bound by residues His187 and His189. Asn407 carries N-linked (GlcNAc...) asparagine glycosylation. The interval 819-838 is disordered; that stretch reads KKQQKQQQQQQQQQQQQHGT. The segment covering 823–835 has biased composition (low complexity); it reads KQQQQQQQQQQQQ. Asn891 carries N-linked (GlcNAc...) asparagine glycosylation.

Belongs to the metallo-dependent hydrolases superfamily. Requires Fe(2+) as cofactor. Mn(2+) serves as cofactor. Zn(2+) is required as a cofactor.

The protein resides in the membrane. Its function is as follows. Amidohydrolase; part of the gene cluster that mediates the biosynthesis of the tetramic acids Sch210971 and Sch210972, potential anti-HIV fungal natural product that contain a decalin core. The PKS module of tasS together with the enoylreductase tasC catalyze the formation of the polyketide unit which is then conjugated to 4-hydroxyl-4-methyl glutamate (HMG) by the condensation domain of the tasS NRPS module. One unique structural feature of Sch210971 and Sch210972 is the tetramic acid motif proposed to be derived from the non-proteinogenic amino acid HMG, by a Dieckmann-type condensation catalyzed by the reductase domain of tasS. The aldolase tasA catalyzes the aldol condensation of 2 molecules of pyruvic acid to yield the intermediate 4-hydroxyl-4-methyl-2-oxoglutarate (HMOG), which can then be stereoselectively transaminated, may be by tasG, to form HMG. The Diels-Alderase tas3 then uses the Dieckmann product of tasS as substrate and catalyzes the Diels-Alder cycloaddition to form the decalin ring of Sch210971 and Sch210972. The sequence is that of Amidohydrolase tasK from Hapsidospora irregularis.